The following is a 166-amino-acid chain: RING-H2 finger protein ATL79 (166 aa).

The signal sequence occupies residues 1-16 (MRLLVAEAASPLSSAA). The chain crosses the membrane as a helical span at residues 41-61 (SVLLILVISALICALSLYAAI). The segment at 71–90 (TEDDHKPDPEAAASSTPTTP) is disordered. The segment covering 81–90 (AAASSTPTTP) has biased composition (low complexity). The RING-type; atypical zinc finger occupies 107–149 (CAICLSEFEQGESIQVLEKCQHGFHVKCIHKWLSTRSSCPTCR).

It belongs to the RING-type zinc finger family. ATL subfamily.

It localises to the membrane. The enzyme catalyses S-ubiquitinyl-[E2 ubiquitin-conjugating enzyme]-L-cysteine + [acceptor protein]-L-lysine = [E2 ubiquitin-conjugating enzyme]-L-cysteine + N(6)-ubiquitinyl-[acceptor protein]-L-lysine.. The protein operates within protein modification; protein ubiquitination. The polypeptide is RING-H2 finger protein ATL79 (ATL79) (Arabidopsis thaliana (Mouse-ear cress)).